The following is a 123-amino-acid chain: Large ribosomal subunit protein bL20 (123 aa).

The protein belongs to the bacterial ribosomal protein bL20 family.

In terms of biological role, binds directly to 23S ribosomal RNA and is necessary for the in vitro assembly process of the 50S ribosomal subunit. It is not involved in the protein synthesizing functions of that subunit. This Chlamydia trachomatis serovar D (strain ATCC VR-885 / DSM 19411 / UW-3/Cx) protein is Large ribosomal subunit protein bL20 (rplT).